A 320-amino-acid chain; its full sequence is Phosphate acetyltransferase (320 aa).

The protein belongs to the phosphate acetyltransferase and butyryltransferase family.

The protein localises to the cytoplasm. The catalysed reaction is acetyl-CoA + phosphate = acetyl phosphate + CoA. It participates in metabolic intermediate biosynthesis; acetyl-CoA biosynthesis; acetyl-CoA from acetate: step 2/2. The chain is Phosphate acetyltransferase (pta) from Mycoplasma pneumoniae (strain ATCC 29342 / M129 / Subtype 1) (Mycoplasmoides pneumoniae).